A 299-amino-acid polypeptide reads, in one-letter code: 5-azacytidine resistance protein azr1 (299 aa).

Residues 35–293 (KSHFPSPATL…DDTTITCLLI (259 aa)) form the PPM-type phosphatase domain.

In terms of biological role, confers azacytidine resistance in high copy. The polypeptide is 5-azacytidine resistance protein azr1 (azr1) (Schizosaccharomyces pombe (strain 972 / ATCC 24843) (Fission yeast)).